The following is a 432-amino-acid chain: Transcriptional adapter 3 (432 aa).

Positions 40 to 69 (IEELDTLQLELETLLSSASRRLRVLEAETQ) form a coiled coil. Disordered stretches follow at residues 88–127 (KEHE…RNMQ) and 275–313 (SPVE…HTKS). The segment covering 293–305 (DGASTSPRSQNKP) has biased composition (polar residues). A coiled-coil region spans residues 367 to 407 (LLRLAKEEMNRQELRQRVRMADNEVMDAFRKIMAARQKKRT).

This sequence belongs to the NGG1 family.

The protein resides in the nucleus. Functions as a component of the PCAF complex. The PCAF complex is capable of efficiently acetylating histones in a nucleosomal context. The polypeptide is Transcriptional adapter 3 (tada3) (Xenopus tropicalis (Western clawed frog)).